A 225-amino-acid polypeptide reads, in one-letter code: THAP domain-containing protein 1 A (225 aa).

The THAP-type zinc-finger motif lies at 5–57; sequence CSAYGCKNRYDKDKPISFHKFPLKRPLLCKKWEAAVRRAEFKPTKYSSICSDH. Positions 139-194 form a coiled coil; sequence VEDTVHQRRRIQQLEEQVDKLRKKLKIANQKCRRQERSLEKLEREVSEYREAKGSG.

It belongs to the THAP1 family.

It is found in the nucleus. It localises to the nucleoplasm. Functionally, DNA-binding transcription regulator that regulates endothelial cell proliferation and G1/S cell-cycle progression. Specifically binds the 5'-[AT]NTNN[GT]GGCA[AGT]-3' core DNA sequence and acts by modulating expression of pRB-E2F cell-cycle target genes. The chain is THAP domain-containing protein 1 A (thap1-a) from Xenopus laevis (African clawed frog).